The chain runs to 182 residues: Epididymal-specific lipocalin-10 (182 aa).

The first 19 residues, 1-19 (MKLEMALSIALALAVVSWT), serve as a signal peptide directing secretion. Asparagine 31 and asparagine 144 each carry an N-linked (GlcNAc...) asparagine glycan. Cysteine 85 and cysteine 176 are joined by a disulfide. Lysine 165 bears the N6-acetyllysine mark.

The protein belongs to the calycin superfamily. Lipocalin family. In terms of tissue distribution, expressed in epididymis.

The protein resides in the secreted. Functionally, may play a role in male fertility. May act as a retinoid carrier protein within the epididymis. The chain is Epididymal-specific lipocalin-10 (Lcn10) from Mus musculus (Mouse).